The sequence spans 161 residues: Nucleotide-binding protein RSc2549 (161 aa).

Belongs to the YajQ family.

Its function is as follows. Nucleotide-binding protein. In Ralstonia nicotianae (strain ATCC BAA-1114 / GMI1000) (Ralstonia solanacearum), this protein is Nucleotide-binding protein RSc2549.